Consider the following 264-residue polypeptide: 3-methyl-2-oxobutanoate hydroxymethyltransferase (264 aa).

Positions 45 and 84 each coordinate Mg(2+). 3-methyl-2-oxobutanoate-binding positions include 45 to 46, Asp-84, and Lys-112; that span reads DS. Glu-114 is a binding site for Mg(2+). Catalysis depends on Glu-181, which acts as the Proton acceptor.

Belongs to the PanB family. As to quaternary structure, homodecamer; pentamer of dimers. Requires Mg(2+) as cofactor.

The protein resides in the cytoplasm. It carries out the reaction 3-methyl-2-oxobutanoate + (6R)-5,10-methylene-5,6,7,8-tetrahydrofolate + H2O = 2-dehydropantoate + (6S)-5,6,7,8-tetrahydrofolate. It functions in the pathway cofactor biosynthesis; (R)-pantothenate biosynthesis; (R)-pantoate from 3-methyl-2-oxobutanoate: step 1/2. In terms of biological role, catalyzes the reversible reaction in which hydroxymethyl group from 5,10-methylenetetrahydrofolate is transferred onto alpha-ketoisovalerate to form ketopantoate. This is 3-methyl-2-oxobutanoate hydroxymethyltransferase from Escherichia coli O1:K1 / APEC.